The sequence spans 460 residues: Diguanylate cyclase DosC (460 aa).

A heme-binding site is contributed by H98. Positions 325-458 (TPLSVLIIDV…GRNRVELWKA (134 aa)) constitute a GGDEF domain. Residue D333 coordinates Mg(2+). N341 and D350 together coordinate substrate. D376 is a binding site for Mg(2+). D376 serves as the catalytic Proton acceptor.

Heme is required as a cofactor. The cofactor is Mg(2+).

It carries out the reaction 2 GTP = 3',3'-c-di-GMP + 2 diphosphate. Its pathway is purine metabolism; 3',5'-cyclic di-GMP biosynthesis. Globin-coupled heme-based oxygen sensor protein displaying diguanylate cyclase (DGC) activity in response to oxygen availability. Thus, catalyzes the synthesis of cyclic diguanylate (c-di-GMP) via the condensation of 2 GTP molecules. Cyclic-di-GMP is a second messenger which controls cell surface-associated traits in bacteria. The chain is Diguanylate cyclase DosC (dosC) from Escherichia coli O157:H7.